Consider the following 118-residue polypeptide: Large ribosomal subunit protein uL18 (118 aa).

Belongs to the universal ribosomal protein uL18 family. As to quaternary structure, part of the 50S ribosomal subunit; part of the 5S rRNA/L5/L18/L25 subcomplex. Contacts the 5S and 23S rRNAs.

This is one of the proteins that bind and probably mediate the attachment of the 5S RNA into the large ribosomal subunit, where it forms part of the central protuberance. This is Large ribosomal subunit protein uL18 from Nitrosospira multiformis (strain ATCC 25196 / NCIMB 11849 / C 71).